The sequence spans 159 residues: MARESGRKLIASNKKARHDYHIEDTYEAGIVLTGTEVKSLRAGRASLVDGFALIKDGEVWLQNVHIPEYAEGSWTNHEPRRPRKLLLHKREILRLLGKTRETGLTLVPLSLYFRDGKAKVELALARGKRAYDKRQALAERHAQREIARALGRRVKGHRM.

It belongs to the SmpB family.

Its subcellular location is the cytoplasm. Functionally, required for rescue of stalled ribosomes mediated by trans-translation. Binds to transfer-messenger RNA (tmRNA), required for stable association of tmRNA with ribosomes. tmRNA and SmpB together mimic tRNA shape, replacing the anticodon stem-loop with SmpB. tmRNA is encoded by the ssrA gene; the 2 termini fold to resemble tRNA(Ala) and it encodes a 'tag peptide', a short internal open reading frame. During trans-translation Ala-aminoacylated tmRNA acts like a tRNA, entering the A-site of stalled ribosomes, displacing the stalled mRNA. The ribosome then switches to translate the ORF on the tmRNA; the nascent peptide is terminated with the 'tag peptide' encoded by the tmRNA and targeted for degradation. The ribosome is freed to recommence translation, which seems to be the essential function of trans-translation. The protein is SsrA-binding protein of Acidothermus cellulolyticus (strain ATCC 43068 / DSM 8971 / 11B).